A 752-amino-acid chain; its full sequence is Pre-mRNA-processing factor 39 (752 aa).

The segment at 1–148 is disordered; sequence MEDSGESMTG…DPAAPQEPEL (148 aa). Residues 28-42 show a composition bias toward polar residues; the sequence is TTGTDDVTGLSTSDL. Composition is skewed to low complexity over residues 43–56, 76–94, and 133–148; these read TTEQPPESQEQTQP, QSASPAEPAAENSEQPPES, and EPAAEADPAAPQEPEL. 3 HAT repeats span residues 180 to 212, 214 to 246, and 254 to 289; these read NHLLGSRKAFDAFFLHYPYCYGYWKKYADIERK, GYIQMADEVYRRGLQAIPLSVDLWLHYITFLRE, and EAESRIRASYEHAVLACGTDFRSDRLWEAYIAWETE. The disordered stretch occupies residues 347–374; it reads NKPSGDEDAETEAPGEELPPGTEDLPDP. Residues 352-361 are compositionally biased toward acidic residues; it reads DEDAETEAPG. HAT repeat units follow at residues 408–440 and 442–474; these read AFEEGIKRPYFHVKALEKTQLNNWREYLDFELE and GTPERVVVLFERCLIACALYEEFWIKYAKYLES. Over residues 678–699 the composition is skewed to basic and acidic residues; it reads SFKRKAENGSEEPDAKRQRTDD. Positions 678–703 are disordered; that stretch reads SFKRKAENGSEEPDAKRQRTDDQSVA. One copy of the HAT 6 repeat lies at 700 to 731; sequence QSVASGQMMDMQANHAGYNYNNWYQYNSWGSQ.

The protein belongs to the PRP39 family.

The protein resides in the nucleus. Its function is as follows. Involved in pre-mRNA splicing. This chain is Pre-mRNA-processing factor 39 (prpf39), found in Danio rerio (Zebrafish).